The sequence spans 216 residues: Uracil-DNA glycosylase (216 aa).

Residue Asp60 is the Proton acceptor of the active site.

Belongs to the uracil-DNA glycosylase (UDG) superfamily. UNG family.

The protein localises to the cytoplasm. The catalysed reaction is Hydrolyzes single-stranded DNA or mismatched double-stranded DNA and polynucleotides, releasing free uracil.. Its function is as follows. Excises uracil residues from the DNA which can arise as a result of misincorporation of dUMP residues by DNA polymerase or due to deamination of cytosine. In Psychromonas ingrahamii (strain DSM 17664 / CCUG 51855 / 37), this protein is Uracil-DNA glycosylase.